Consider the following 299-residue polypeptide: Polyamine aminopropyltransferase (299 aa).

Residues 6–252 form the PABS domain; the sequence is IVLLFALLCT…SLPNQQALQQ (247 aa). Residues glutamine 36, glutamate 120, and 147-148 contribute to the S-methyl-5'-thioadenosine site; that span reads DA. The Proton acceptor role is filled by aspartate 168.

Belongs to the spermidine/spermine synthase family. In terms of assembly, homodimer or homotetramer.

Its subcellular location is the cytoplasm. The catalysed reaction is S-adenosyl 3-(methylsulfanyl)propylamine + putrescine = S-methyl-5'-thioadenosine + spermidine + H(+). It functions in the pathway amine and polyamine biosynthesis; spermidine biosynthesis; spermidine from putrescine: step 1/1. Functionally, catalyzes the irreversible transfer of a propylamine group from the amino donor S-adenosylmethioninamine (decarboxy-AdoMet) to putrescine (1,4-diaminobutane) to yield spermidine. The chain is Polyamine aminopropyltransferase from Vibrio vulnificus (strain CMCP6).